Consider the following 2624-residue polypeptide: Highly reducing polyketide synthase ALT1 (2624 aa).

In terms of domain architecture, Ketosynthase family 3 (KS3) spans 28-449; that stretch reads VLPLAIVGMG…GSNAHCILES (422 aa). Residue cysteine 200 is the For beta-ketoacyl synthase activity of the active site. Positions 289 to 308 are disordered; it reads VRGTSSNSDGKTPGMSMPSS. Active-site for beta-ketoacyl synthase activity residues include histidine 335 and histidine 372. Polar residues predominate over residues 523-544; it reads ESYSNHHTLTETTNPSNNTATN. Positions 523 to 545 are disordered; that stretch reads ESYSNHHTLTETTNPSNNTATNG. The tract at residues 639-945 is malonyl-CoA:ACP transacylase (MAT) domain; sequence VFTGQGAQWA…GYTPAMIRGK (307 aa). Residues 1009 to 1140 are N-terminal hotdog fold; that stretch reads HELLGSQTLE…GQVRPGRDAH (132 aa). Positions 1009–1301 are dehydratase (DH) domain; that stretch reads HELLGSQTLE…LEGGKFSPIE (293 aa). Residues 1009 to 1306 enclose the PKS/mFAS DH domain; that stretch reads HELLGSQTLE…FSPIEVDDGI (298 aa). Histidine 1041 (proton acceptor; for dehydratase activity) is an active-site residue. Residues 1157-1306 form a C-terminal hotdog fold region; it reads QYPRPVDSLY…FSPIEVDDGI (150 aa). Aspartate 1217 functions as the Proton donor; for dehydratase activity in the catalytic mechanism. A methyltransferase (CMet) domain region spans residues 1493-1599; it reads LEIGAGTGGA…RKLLAPEGYL (107 aa). Residues 1895-2205 are enoyl reductase (ER) (ER) domain; sequence GLLQTLKWVD…KGTHLGKIVV (311 aa). The tract at residues 2230 to 2509 is ketoreductase (KR) domain; the sequence is TYVLVGGLGG…DSDALRFFIT (280 aa). The Carrier domain occupies 2522–2600; sequence ASLDLVTRTI…GLAKLILDAL (79 aa). Serine 2559 is subject to O-(pantetheine 4'-phosphoryl)serine.

The protein operates within mycotoxin biosynthesis. Highly reducing polyketide synthase; part of the gene cluster that mediates the biosynthesis of the host-selective toxins (HSTs) AAL-toxins, sphinganine-analog mycotoxins responsible for Alternaria stem canker on tomato by the tomato pathotype. The biosynthesis starts with the polyketide synthase ALT1-catalyzed C-16 carbon chain assembly from one starter acetyl-CoA unit with malonyl-CoA extender units. ALT1 also selectively transfers methyl groups at the first and the third cycle of chain elongation for AAL toxin. The C-16 polyketide chain is released from the enzyme by a nucleophilic attack of a carbanion, which is derived from R-carbon of glycin by decarboxylation, on the carbonyl carbon of polyketide acyl chain. This step is probably catalyzed by a pyridoxal 5'-phosphate-dependent aminoacyl transferase ALT4. The respective functions of the other enzymes encoded by the cluster have still to be elucidated. The sphingosine N-acyltransferase-like protein ALT7 seems not to act as a resistance/self-tolerance factor against the toxin in the toxin biosynthetic gene cluster, contrary to what is expected. This chain is Highly reducing polyketide synthase ALT1, found in Alternaria alternata (Alternaria rot fungus).